The following is a 525-amino-acid chain: Apolipoprotein N-acyltransferase 2 (525 aa).

Transmembrane regions (helical) follow at residues 25–45 (ILNF…YYAL), 56–76 (FLYG…LAFF), 81–101 (IFTL…FGFL), 115–135 (FFFA…FLAY), 153–173 (FVDI…AACL), and 200–220 (LIFT…ILSI). Positions 228–486 (LNTVIVQQNT…AESVYTEVPV (259 aa)) constitute a CN hydrolase domain. Residue Glu-274 is the Proton acceptor of the active site. The active site involves Lys-339. The Nucleophile role is filled by Cys-397. Residues 495–515 (ASYKDWLPIMMFLILIFNIFL) form a helical membrane-spanning segment.

Belongs to the CN hydrolase family. Apolipoprotein N-acyltransferase subfamily.

Its subcellular location is the cell inner membrane. The catalysed reaction is N-terminal S-1,2-diacyl-sn-glyceryl-L-cysteinyl-[lipoprotein] + a glycerophospholipid = N-acyl-S-1,2-diacyl-sn-glyceryl-L-cysteinyl-[lipoprotein] + a 2-acyl-sn-glycero-3-phospholipid + H(+). The protein operates within protein modification; lipoprotein biosynthesis (N-acyl transfer). Catalyzes the phospholipid dependent N-acylation of the N-terminal cysteine of apolipoprotein, the last step in lipoprotein maturation. This is Apolipoprotein N-acyltransferase 2 from Treponema denticola (strain ATCC 35405 / DSM 14222 / CIP 103919 / JCM 8153 / KCTC 15104).